We begin with the raw amino-acid sequence, 193 residues long: Copper-binding lipoprotein NosL (193 aa).

The signal sequence occupies residues 1-19 (MRTRLRFVLVAAALALLSA). C20 carries N-palmitoyl cysteine lipidation. A lipid anchor (S-diacylglycerol cysteine) is attached at C20.

It belongs to the NosL family. As to quaternary structure, monomer. Apo-NosL can form homodimers.

The protein resides in the cell membrane. Functionally, may act as a metallochaperone involved in nitrous oxide reductase assembly. Specifically binds Cu(+). The sequence is that of Copper-binding lipoprotein NosL from Achromobacter cycloclastes.